Here is a 170-residue protein sequence, read N- to C-terminus: MADLIMGIDPGTLVCGYAFIRVENRYQIQPHSFGKIKLSQKQALSHRYRQLFTEISTILQREAPKAVVLETQYVHKNPQSTIKLGMARGVLLLAASLQDISVFEYAPNTAKKAAVGKGNASKQQVQLMVSKLLNIQDLLADDNEDIADAFALAMCHAHLAPYQDLKKSLL.

Catalysis depends on residues D9, E70, and D145. The Mg(2+) site is built by D9, E70, and D145.

This sequence belongs to the RuvC family. In terms of assembly, homodimer which binds Holliday junction (HJ) DNA. The HJ becomes 2-fold symmetrical on binding to RuvC with unstacked arms; it has a different conformation from HJ DNA in complex with RuvA. In the full resolvosome a probable DNA-RuvA(4)-RuvB(12)-RuvC(2) complex forms which resolves the HJ. Requires Mg(2+) as cofactor.

The protein resides in the cytoplasm. It carries out the reaction Endonucleolytic cleavage at a junction such as a reciprocal single-stranded crossover between two homologous DNA duplexes (Holliday junction).. In terms of biological role, the RuvA-RuvB-RuvC complex processes Holliday junction (HJ) DNA during genetic recombination and DNA repair. Endonuclease that resolves HJ intermediates. Cleaves cruciform DNA by making single-stranded nicks across the HJ at symmetrical positions within the homologous arms, yielding a 5'-phosphate and a 3'-hydroxyl group; requires a central core of homology in the junction. The consensus cleavage sequence is 5'-(A/T)TT(C/G)-3'. Cleavage occurs on the 3'-side of the TT dinucleotide at the point of strand exchange. HJ branch migration catalyzed by RuvA-RuvB allows RuvC to scan DNA until it finds its consensus sequence, where it cleaves and resolves the cruciform DNA. This is Crossover junction endodeoxyribonuclease RuvC from Chlamydia muridarum (strain MoPn / Nigg).